The sequence spans 1100 residues: Serine/threonine/tyrosine-interacting-like protein 2 (1100 aa).

Residues 1–12 (MASSVEDQQLQQ) show a composition bias toward polar residues. A disordered region spans residues 1–21 (MASSVEDQQLQQEEAESVKDV). Residues 141 to 289 (SPVDEVWPNV…LRQLNETLME (149 aa)) enclose the Tyrosine-protein phosphatase domain. A compositionally biased stretch (polar residues) spans 356-374 (CGSQQPNMQQPADQPSLPG). 8 disordered regions span residues 356-383 (CGSQ…EDGD), 411-436 (EDED…TSED), 479-504 (AAAR…DDVQ), 542-561 (KENA…APDL), 575-615 (KQQK…ERSR), 667-686 (VLSG…TPAP), 888-1060 (CEKP…DEEI), and 1075-1100 (VAEE…HDHK). Basic and acidic residues predominate over residues 418 to 428 (DKTQRAVRPDD). Over residues 580–615 (HGGEENKEEILQMSRGEDTATARRRQRREEVLERSR) the composition is skewed to basic and acidic residues. Residues 667 to 676 (VLSGRSTRSL) show a composition bias toward low complexity. Residues 888–898 (CEKPKPKRDYG) show a composition bias toward basic and acidic residues. Composition is skewed to polar residues over residues 907-916 (ASANNPTSSI), 994-1013 (SYSS…TSFA), and 1029-1041 (FQNH…SSVY). Residues 1089 to 1100 (RKQEESKSHDHK) show a composition bias toward basic and acidic residues.

This sequence belongs to the protein-tyrosine phosphatase family. Non-receptor class dual specificity subfamily. In terms of tissue distribution, expressed in muscle fibers in a regular striated pattern (at protein level).

Its subcellular location is the cytoplasm. It localises to the myofibril. It is found in the sarcomere. Functionally, required for myofiber maturation. This chain is Serine/threonine/tyrosine-interacting-like protein 2 (styxl2), found in Danio rerio (Zebrafish).